The following is a 218-amino-acid chain: Glutathione S-transferase U24 (218 aa).

In terms of domain architecture, GST N-terminal spans 3 to 82 (DEVILLDFWA…YIDETWPDNN (80 aa)). Glutathione contacts are provided by residues 13-14 (SM), 39-40 (NK), 53-54 (KI), and 66-67 (ES). A GST C-terminal domain is found at 88–215 (DPYKRAHAKF…TFISERRKKL (128 aa)). Threonine 148 carries the post-translational modification Phosphothreonine.

Belongs to the GST superfamily. Tau family.

The protein resides in the cytoplasm. The protein localises to the cytosol. The catalysed reaction is RX + glutathione = an S-substituted glutathione + a halide anion + H(+). May be involved in the conjugation of reduced glutathione to a wide number of exogenous and endogenous hydrophobic electrophiles and have a detoxification role against certain herbicides. The polypeptide is Glutathione S-transferase U24 (GSTU24) (Arabidopsis thaliana (Mouse-ear cress)).